We begin with the raw amino-acid sequence, 178 residues long: Interleukin-1 receptor antagonist protein (178 aa).

An N-terminal signal peptide occupies residues 1-26 (MEICRGPYSHLISLLLILLFRSESAG). A disulfide bond links cysteine 92 and cysteine 142. Asparagine 110 carries an N-linked (GlcNAc...) asparagine glycan.

Belongs to the IL-1 family.

Its subcellular location is the secreted. In terms of biological role, anti-inflammatory antagonist of interleukin-1 family of proinflammatory cytokines such as interleukin-1beta/IL1B and interleukin-1alpha/IL1A. Protects from immune dysregulation and uncontrolled systemic inflammation triggered by IL1 for a range of innate stimulatory agents such as pathogens. This is Interleukin-1 receptor antagonist protein (Il1rn) from Rattus norvegicus (Rat).